A 427-amino-acid polypeptide reads, in one-letter code: 3-phosphoshikimate 1-carboxyvinyltransferase (427 aa).

3-phosphoshikimate contacts are provided by K20, S21, and R25. Phosphoenolpyruvate is bound at residue K20. Positions 92 and 120 each coordinate phosphoenolpyruvate. 3-phosphoshikimate-binding residues include S166, Q168, D312, and K339. Q168 lines the phosphoenolpyruvate pocket. Catalysis depends on D312, which acts as the Proton acceptor. Phosphoenolpyruvate is bound by residues R343 and R385.

This sequence belongs to the EPSP synthase family. In terms of assembly, monomer.

The protein resides in the cytoplasm. It carries out the reaction 3-phosphoshikimate + phosphoenolpyruvate = 5-O-(1-carboxyvinyl)-3-phosphoshikimate + phosphate. It participates in metabolic intermediate biosynthesis; chorismate biosynthesis; chorismate from D-erythrose 4-phosphate and phosphoenolpyruvate: step 6/7. Catalyzes the transfer of the enolpyruvyl moiety of phosphoenolpyruvate (PEP) to the 5-hydroxyl of shikimate-3-phosphate (S3P) to produce enolpyruvyl shikimate-3-phosphate and inorganic phosphate. This Streptococcus thermophilus (strain CNRZ 1066) protein is 3-phosphoshikimate 1-carboxyvinyltransferase.